The following is a 367-amino-acid chain: ELAV-like protein 3 (367 aa).

RRM domains follow at residues 39-117, 125-205, and 284-362; these read TNLI…YARP, ANLY…FANN, and WCIF…FKTS.

It belongs to the RRM elav family. In terms of assembly, interacts with MAP1B light chain LC1. Brain specific. Expressed in the hippocampus with expression in CA1, CA3 and dentate gyrus.

Its function is as follows. RNA-binding protein that binds to AU-rich element (ARE) sequences of target mRNAs, including VEGF mRNA. May also bind poly-A tracts via RRM 3. May be involved in neuronal differentiation and maintenance. Plays a role in the stabilization of GAP43 mRNA and in spatial learning. This Mus musculus (Mouse) protein is ELAV-like protein 3 (Elavl3).